A 319-amino-acid polypeptide reads, in one-letter code: Acetyl-coenzyme A carboxylase carboxyl transferase subunit alpha (319 aa).

The 262-residue stretch at 35–296 (NIDEEVHRLR…KAQLLEDLAD (262 aa)) folds into the CoA carboxyltransferase C-terminal domain.

It belongs to the AccA family. In terms of assembly, acetyl-CoA carboxylase is a heterohexamer composed of biotin carboxyl carrier protein (AccB), biotin carboxylase (AccC) and two subunits each of ACCase subunit alpha (AccA) and ACCase subunit beta (AccD).

The protein localises to the cytoplasm. The enzyme catalyses N(6)-carboxybiotinyl-L-lysyl-[protein] + acetyl-CoA = N(6)-biotinyl-L-lysyl-[protein] + malonyl-CoA. The protein operates within lipid metabolism; malonyl-CoA biosynthesis; malonyl-CoA from acetyl-CoA: step 1/1. Component of the acetyl coenzyme A carboxylase (ACC) complex. First, biotin carboxylase catalyzes the carboxylation of biotin on its carrier protein (BCCP) and then the CO(2) group is transferred by the carboxyltransferase to acetyl-CoA to form malonyl-CoA. The sequence is that of Acetyl-coenzyme A carboxylase carboxyl transferase subunit alpha from Salmonella arizonae (strain ATCC BAA-731 / CDC346-86 / RSK2980).